The sequence spans 442 residues: MPLPCDTILQAALIVTQDDARTVIEDGAIAIHEGRIAAVGQRDAIVGNWHGVTVIDMGESLIMPGLVNAHTHASMTLLRGLADDLPLMDWLTGHIFPVEKGLTGELVELGALLGCAEMLRTGTTAFSDMYLIEDATLRAVDRAGLRCLAGEAIFAFPSPAYADPETAFDLVRAQHDRWKHHARAALAVAPHAVYTSTPAILARCRDLAEELGLPIHLHLAETATETAQCIEQHGARPVPYCDGLGLLTPRTTLAHCVDLTEGEIDLLAERGVTVAHCPESNMKLASGIAPATAMLGRGMTLGLGTDGAASNNSLNMFTEMTSCALLHKVHHMDPTCAPASAVLDMATRGGAHALHMQGIGRIEAGCPADIIALDLRAPNMQPIFNPASHLVYAATGHETRLTMVGGEVLYLDGCYTRFDMDDLLKEVRKARTWAMEQVRAAR.

Residues His70 and His72 each contribute to the Zn(2+) site. Substrate contacts are provided by Glu99 and His191. His218 provides a ligand contact to Zn(2+). Substrate-binding residues include Glu221 and Asp306. Asp306 is a Zn(2+) binding site.

The protein belongs to the metallo-dependent hydrolases superfamily. MTA/SAH deaminase family. The cofactor is Zn(2+).

The enzyme catalyses S-adenosyl-L-homocysteine + H2O + H(+) = S-inosyl-L-homocysteine + NH4(+). It catalyses the reaction S-methyl-5'-thioadenosine + H2O + H(+) = S-methyl-5'-thioinosine + NH4(+). Its function is as follows. Catalyzes the deamination of 5-methylthioadenosine and S-adenosyl-L-homocysteine into 5-methylthioinosine and S-inosyl-L-homocysteine, respectively. Is also able to deaminate adenosine. In Nitratidesulfovibrio vulgaris (strain ATCC 29579 / DSM 644 / CCUG 34227 / NCIMB 8303 / VKM B-1760 / Hildenborough) (Desulfovibrio vulgaris), this protein is 5-methylthioadenosine/S-adenosylhomocysteine deaminase.